The following is a 190-amino-acid chain: Endoribonuclease YbeY (190 aa).

A disordered region spans residues 1-25; the sequence is MSQPRPGHRPDCNGADPDSNFASMT. Histidine 147, histidine 151, and histidine 157 together coordinate Zn(2+).

Belongs to the endoribonuclease YbeY family. Zn(2+) serves as cofactor.

The protein localises to the cytoplasm. Single strand-specific metallo-endoribonuclease involved in late-stage 70S ribosome quality control and in maturation of the 3' terminus of the 16S rRNA. This Rhodopseudomonas palustris (strain ATCC BAA-98 / CGA009) protein is Endoribonuclease YbeY.